A 367-amino-acid polypeptide reads, in one-letter code: Anhydro-N-acetylmuramic acid kinase (367 aa).

Residue 11–18 coordinates ATP; the sequence is GTSLDGVD.

The protein belongs to the anhydro-N-acetylmuramic acid kinase family.

The catalysed reaction is 1,6-anhydro-N-acetyl-beta-muramate + ATP + H2O = N-acetyl-D-muramate 6-phosphate + ADP + H(+). It functions in the pathway amino-sugar metabolism; 1,6-anhydro-N-acetylmuramate degradation. Its pathway is cell wall biogenesis; peptidoglycan recycling. Its function is as follows. Catalyzes the specific phosphorylation of 1,6-anhydro-N-acetylmuramic acid (anhMurNAc) with the simultaneous cleavage of the 1,6-anhydro ring, generating MurNAc-6-P. Is required for the utilization of anhMurNAc either imported from the medium or derived from its own cell wall murein, and thus plays a role in cell wall recycling. The polypeptide is Anhydro-N-acetylmuramic acid kinase (Rhodopseudomonas palustris (strain HaA2)).